Consider the following 886-residue polypeptide: Probable mixed-linked glucan synthase 8 (886 aa).

2 helical membrane passes run 87–107 (ILLHPYRLLTLVRLVAIVLFF) and 118–138 (GMFFWWISVIGDFWFGVSWLL). Asp-213 is a catalytic residue. The substrate site is built by Asp-413 and Asp-415. The active site involves Asp-577. Helical transmembrane passes span 659-679 (VFLLFYLLFPVIWIFRGIFYI), 683-703 (FPTYVLYLVIVIFMSEMIGMV), 723-743 (IIGATAVYPLAVLHIVLKCFG), 775-795 (LLFPTIVVIAVNICAIGAAIG), 812-832 (LGLVFNVWILLLIYPFALGIM), and 840-860 (YILFVLIVISFVIIALADIAI).

This sequence belongs to the glycosyltransferase 2 family. Plant cellulose synthase-like F subfamily.

The protein localises to the golgi apparatus membrane. In terms of biological role, may catalyze both beta-1,3 and beta-1,4 glycosidic linkage on beta-D-glucan. Essential for (1,3;1,4)-beta-D-glucans synthesis in grasses and cereals (Poaceae). The mixed-linked glucans (which are not present in walls of dicotyledons or most other monocotyledonous plants) are particularly important constituents of the walls of the starchy endosperm and aleurone cells of cereal grains such as oats, wheat, rice and barley. They can account for up to 70% by weight of the wall. This chain is Probable mixed-linked glucan synthase 8 (CSFL8), found in Oryza sativa subsp. japonica (Rice).